Here is an 862-residue protein sequence, read N- to C-terminus: S-layer protein EA1 (862 aa).

Positions 1–29 (MAKTNSYKKVIAGTMTAAMVAGIVSPVAA) are cleaved as a signal peptide. SLH domains lie at 30 to 93 (AGKS…NAQP), 94 to 151 (SFKD…KVNG), and 152 to 214 (ELVT…DNAQ).

It localises to the secreted. It is found in the cell wall. Its subcellular location is the S-layer. Its function is as follows. The S-layer is a paracrystalline mono-layered assembly of proteins which coat the surface of bacteria. The polypeptide is S-layer protein EA1 (eag) (Bacillus anthracis).